Consider the following 153-residue polypeptide: Ribosome maturation factor RimP (153 aa).

It belongs to the RimP family.

Its subcellular location is the cytoplasm. In terms of biological role, required for maturation of 30S ribosomal subunits. In Pelotomaculum thermopropionicum (strain DSM 13744 / JCM 10971 / SI), this protein is Ribosome maturation factor RimP.